A 474-amino-acid chain; its full sequence is Gamma-aminobutyric acid receptor subunit beta-1 (474 aa).

A signal peptide spans 1–25 (MWTVQNRESLGLLSFPVMITMVCCA). At 26 to 245 (HSTNEPSNMS…SFRLKRNIGY (220 aa)) the chain is on the extracellular side. An N-linked (GlcNAc...) asparagine glycan is attached at N105. Position 122 (Y122) interacts with histamine. C161 and C175 form a disulfide bridge. Residue N174 is glycosylated (N-linked (GlcNAc...) asparagine). Histamine-binding positions include 181-182 (SY) and T227. 2 residues coordinate 4-aminobutanoate: Y182 and T227. 3 helical membrane passes run 246-267 (FILQ…SFWI), 271-293 (ASAA…STHL), and 305-327 (AIDI…YAFV). The Cytoplasmic segment spans residues 328 to 451 (NYIFFGKGPQ…DLTDVNSIDK (124 aa)). The chain crosses the membrane as a helical span at residues 452 to 473 (WSRMFFPITFSLFNVVYWLYYV).

Belongs to the ligand-gated ion channel (TC 1.A.9) family. Gamma-aminobutyric acid receptor (TC 1.A.9.5) subfamily. GABRB1 sub-subfamily. Heteropentamer, formed by a combination of alpha (GABRA1-6), beta (GABRB1-3), gamma (GABRG1-3), delta (GABRD), epsilon (GABRE), rho (GABRR1-3), pi (GABRP) and theta (GABRQ) chains, each subunit exhibiting distinct physiological and pharmacological properties. Binds UBQLN1.

The protein resides in the postsynaptic cell membrane. The protein localises to the cell membrane. The enzyme catalyses chloride(in) = chloride(out). Its activity is regulated as follows. Potentiated by etomidate, propofol, pregnanolone and flurazepam. Potentiated by histamine. In terms of biological role, beta subunit of the heteropentameric ligand-gated chloride channel gated by gamma-aminobutyric acid (GABA), a major inhibitory neurotransmitter in the brain. GABA-gated chloride channels, also named GABA(A) receptors (GABAAR), consist of five subunits arranged around a central pore and contain one or two GABA active binding sites located at the alpha and beta subunit interfaces, depending on subunit composition. When activated by GABA, GABAARs selectively allow the flow of chloride anions across the cell membrane down their electrochemical gradient. Chloride influx into the postsynaptic neuron following GABAAR opening decreases the neuron ability to generate a new action potential, thereby reducing nerve transmission. Beta-containing GABAARs can simultaneously bind GABA and histamine where histamine binds at the interface of two neighboring beta subunits, which may be involved in the regulation of sleep and wakefulness. The polypeptide is Gamma-aminobutyric acid receptor subunit beta-1 (Homo sapiens (Human)).